Consider the following 102-residue polypeptide: Small ribosomal subunit protein uS10 (102 aa).

The protein belongs to the universal ribosomal protein uS10 family. As to quaternary structure, part of the 30S ribosomal subunit.

Functionally, involved in the binding of tRNA to the ribosomes. The chain is Small ribosomal subunit protein uS10 from Methylobacillus flagellatus (strain ATCC 51484 / DSM 6875 / VKM B-1610 / KT).